Consider the following 902-residue polypeptide: Nitrate reductase [NADPH] (902 aa).

Mo-molybdopterin is bound at residue Cys182. The Cytochrome b5 heme-binding domain maps to 537–612 (LPLIFADEVA…LKKYCIGRCS (76 aa)). Positions 572 and 595 each coordinate heme. The FAD-binding FR-type domain occupies 637-751 (RTKVPIVLIS…KGPLGHFTYY (115 aa)). FAD-binding positions include 689-692 (RAYT), 708-712 (LIKVY), Phe713, 725-727 (LFS), and Thr778. NADP(+) is bound at residue 872 to 879 (CMCGPEGM).

This sequence belongs to the nitrate reductase family. In terms of assembly, homodimer. FAD is required as a cofactor. The cofactor is heme. Mo-molybdopterin serves as cofactor.

It carries out the reaction nitrite + NADP(+) + H2O = nitrate + NADPH + H(+). Nitrate reductase is a key enzyme involved in the first step of nitrate assimilation in plants, fungi and bacteria. The sequence is that of Nitrate reductase [NADPH] (NIAA) from Phytophthora infestans (Potato late blight agent).